Consider the following 264-residue polypeptide: 5'-nucleotidase SurE (264 aa).

Residues Asp-9, Asp-10, Ser-40, and Asn-95 each coordinate a divalent metal cation.

Belongs to the SurE nucleotidase family. A divalent metal cation serves as cofactor.

The protein resides in the cytoplasm. The enzyme catalyses a ribonucleoside 5'-phosphate + H2O = a ribonucleoside + phosphate. Its function is as follows. Nucleotidase that shows phosphatase activity on nucleoside 5'-monophosphates. This Helicobacter hepaticus (strain ATCC 51449 / 3B1) protein is 5'-nucleotidase SurE.